Here is a 161-residue protein sequence, read N- to C-terminus: Putative acetyltransferase SAR0816 (161 aa).

The protein belongs to the transferase hexapeptide repeat family.

In Staphylococcus aureus (strain MRSA252), this protein is Putative acetyltransferase SAR0816.